The following is a 738-amino-acid chain: Integrin beta-2-like protein (738 aa).

The first 22 residues, 1–22 (MLGQCTLLPVLAGLLSLESALS), serve as a signal peptide directing secretion. Residues 23-671 (QLCTKDNVST…LVCAEISNTT (649 aa)) are Extracellular-facing. One can recognise a PSI domain in the interval 24 to 74 (LCTKDNVSTCQDCIRSGPSCAWCQKLNFTGRGEPDSVRCDTPEQLLLKGCT). Intrachain disulfides connect Cys25–Cys419, Cys33–Cys43, Cys36–Cys73, Cys46–Cys62, Cys218–Cys258, Cys358–Cys372, Cys421–Cys439, Cys431–Cys442, Cys444–Cys453, Cys455–Cys486, Cys469–Cys484, Cys478–Cys489, Cys491–Cys506, Cys508–Cys531, Cys513–Cys529, Cys521–Cys534, Cys536–Cys545, Cys547–Cys570, Cys554–Cys568, Cys562–Cys573, Cys575–Cys584, Cys594–Cys603, and Cys600–Cys664. Residue Asn29 is glycosylated (N-linked (GlcNAc...) asparagine). N-linked (GlcNAc...) asparagine glycosylation is found at Asn50, Asn102, Asn173, Asn226, Asn252, Asn342, Asn360, and Asn386. A VWFA domain is found at 126-329 (SVDLYFLMGL…DSSNVAQLIR (204 aa)). I-EGF domains lie at 421-454 (CQEQ…KNCE), 455-507 (CQTQ…QYCE), 508-546 (CNNV…SACQ), and 547-585 (CRMS…PLCE). Residue Asn473 is glycosylated (N-linked (GlcNAc...) asparagine). 2 N-linked (GlcNAc...) asparagine glycosylation sites follow: Asn627 and Asn669. The chain crosses the membrane as a helical span at residues 672 to 692 (ILLGVIVGVLLAVIFLLVYCM). The Cytoplasmic portion of the chain corresponds to 693-738 (VYLKGTQKAAKLPRKGGAQSTLAQQPHFQEPHHVEPVWNQERQGTQ). Residues 709-738 (GAQSTLAQQPHFQEPHHVEPVWNQERQGTQ) are disordered. Residues 710–719 (AQSTLAQQPH) show a composition bias toward polar residues.

The protein belongs to the integrin beta chain family. Monomer and homodimer. Unlike integrin beta chains, no alpha chain partner has yet been found. N-glycosylated. As to expression, expressed predominantly in maturing and mature neutrophils.

It is found in the cell membrane. During inflammatory stimulation, plays a role in retaining Cxcl13-expressing cells at the site of the inflammatory response. The sequence is that of Integrin beta-2-like protein from Mus musculus (Mouse).